The sequence spans 116 residues: Protein aq_1857 (116 aa).

It belongs to the HesB/IscA family.

The sequence is that of Protein aq_1857 from Aquifex aeolicus (strain VF5).